We begin with the raw amino-acid sequence, 78 residues long: Defensin beta 136 (78 aa).

Positions 1–21 (MNLCLSALLFFLVILLPSGKG) are cleaved as a signal peptide. Cystine bridges form between cysteine 33/cysteine 60, cysteine 40/cysteine 54, and cysteine 44/cysteine 61.

Belongs to the beta-defensin family.

It is found in the secreted. Functionally, host defense peptide that exhibits antibacterial and antifungal activity. Exhibits antimicrobial activity against E.coli, S.aureus and C.albicans (in vitro). Has high lipopolysaccharide (LPS)-binding affinity, and may thereby be involved in immunoregulation through LPS neutralization. The chain is Defensin beta 136 (DEFB136) from Homo sapiens (Human).